The sequence spans 465 residues: ATP synthase subunit beta (465 aa).

Residue glycine 148–threonine 155 coordinates ATP.

Belongs to the ATPase alpha/beta chains family. As to quaternary structure, F-type ATPases have 2 components, CF(1) - the catalytic core - and CF(0) - the membrane proton channel. CF(1) has five subunits: alpha(3), beta(3), gamma(1), delta(1), epsilon(1). CF(0) has three main subunits: a(1), b(2) and c(9-12). The alpha and beta chains form an alternating ring which encloses part of the gamma chain. CF(1) is attached to CF(0) by a central stalk formed by the gamma and epsilon chains, while a peripheral stalk is formed by the delta and b chains.

It is found in the cell inner membrane. It carries out the reaction ATP + H2O + 4 H(+)(in) = ADP + phosphate + 5 H(+)(out). In terms of biological role, produces ATP from ADP in the presence of a proton gradient across the membrane. The catalytic sites are hosted primarily by the beta subunits. The polypeptide is ATP synthase subunit beta (Neisseria meningitidis serogroup A / serotype 4A (strain DSM 15465 / Z2491)).